Reading from the N-terminus, the 510-residue chain is Hyaluronidase PH-20 (510 aa).

The N-terminal stretch at 1-35 is a signal peptide; that stretch reads MGVLKFKHIFFRSFVKSSGVSQIVFTFLLIPCCLT. 2 disulfides stabilise this stretch: C60-C351 and C224-C238. An N-linked (GlcNAc...) asparagine glycan is attached at N82. Catalysis depends on E148, which acts as the Proton donor. Residues N166, N235, N254, and N368 are each glycosylated (N-linked (GlcNAc...) asparagine). 3 cysteine pairs are disulfide-bonded: C376–C387, C381–C435, and C437–C464. N393, N440, and N484 each carry an N-linked (GlcNAc...) asparagine glycan. S491 carries GPI-anchor amidated serine lipidation. Positions 492 to 510 are cleaved as a propeptide — removed in mature form; that stretch reads TTMFIVNILFLIISSVASL.

This sequence belongs to the glycosyl hydrolase 56 family. In terms of tissue distribution, testis.

It localises to the cell membrane. It carries out the reaction Random hydrolysis of (1-&gt;4)-linkages between N-acetyl-beta-D-glucosamine and D-glucuronate residues in hyaluronate.. Its function is as follows. Involved in sperm-egg adhesion. Upon fertilization sperm must first penetrate a layer of cumulus cells that surrounds the egg before reaching the zona pellucida. The cumulus cells are embedded in a matrix containing hyaluronic acid which is formed prior to ovulation. This protein aids in penetrating the layer of cumulus cells by digesting hyaluronic acid. The sequence is that of Hyaluronidase PH-20 (SPAM1) from Macaca fascicularis (Crab-eating macaque).